The sequence spans 198 residues: Superoxide dismutase [Mn], mitochondrial (198 aa).

H26 contributes to the Mn(2+) binding site. The residue at position 34 (Y34) is a 3'-nitrotyrosine. N6-acetyllysine; alternate occurs at positions 44 and 51. 2 positions are modified to N6-succinyllysine; alternate: K44 and K51. Residue H74 participates in Mn(2+) binding. K90 is modified (N6-acetyllysine). N6-acetyllysine; alternate occurs at positions 98 and 106. N6-succinyllysine; alternate occurs at positions 98 and 106. Positions 159 and 163 each coordinate Mn(2+). At K178 the chain carries N6-acetyllysine.

This sequence belongs to the iron/manganese superoxide dismutase family. In terms of assembly, homotetramer. It depends on Mn(2+) as a cofactor. Nitrated under oxidative stress. Nitration coupled with oxidation inhibits the catalytic activity. In terms of processing, acetylation at Lys-98 decreases enzymatic activity. Deacetylated by SIRT3 upon exposure to ionizing radiations or after long fasting. Post-translationally, polyubiquitinated; leading to proteasomal degradation. Deubiquitinated by USP36 which increases protein stability.

The protein localises to the mitochondrion matrix. It carries out the reaction 2 superoxide + 2 H(+) = H2O2 + O2. Its function is as follows. Destroys superoxide anion radicals which are normally produced within the cells and which are toxic to biological systems. The polypeptide is Superoxide dismutase [Mn], mitochondrial (SOD2) (Callithrix jacchus (White-tufted-ear marmoset)).